Here is a 157-residue protein sequence, read N- to C-terminus: Eukaryotic translation initiation factor 5A-2 (157 aa).

The residue at position 2 (Ser2) is an N-acetylserine. The residue at position 2 (Ser2) is a Phosphoserine. Thr7 is modified (phosphothreonine). Position 51 is a hypusine (Lys51). Phosphoserine is present on Ser74. A Glycyl lysine isopeptide (Lys-Gly) (interchain with G-Cter in ubiquitin) cross-link involves residue Lys86.

Belongs to the eIF-5A family. In terms of assembly, homodimer. Binds to 80S ribosomes. Actively translating ribosomes show mutually exclusive binding of eIF5a (HYP2 or ANB1) and EFT1/eEF2. Interacts with DYS1 and LIA1. Lys-51 undergoes hypusination, a unique post-translational modification that consists in the addition of a butylamino group from spermidine to lysine side chain, leading to the formation of the unusual amino acid hypusine. eIF-5As are the only known proteins to undergo this modification, which is essential for their function.

It is found in the cytoplasm. Functionally, translation factor that promotes translation elongation and termination, particularly upon ribosome stalling at specific amino acid sequence contexts. Binds between the exit (E) and peptidyl (P) site of the ribosome and promotes rescue of stalled ribosome: specifically required for efficient translation of polyproline-containing peptides as well as other motifs that stall the ribosome. Acts as ribosome quality control (RQC) cofactor by joining the RQC complex to facilitate peptidyl transfer during CAT tailing step. Involved in actin dynamics and cell cycle progression, mRNA decay and probably in a pathway involved in stress response and maintenance of cell wall integrity. The sequence is that of Eukaryotic translation initiation factor 5A-2 (ANB1) from Saccharomyces cerevisiae (strain ATCC 204508 / S288c) (Baker's yeast).